We begin with the raw amino-acid sequence, 389 residues long: MKAGKSERERSSRRRHRSGDALATVVVKQERLSPEPVAHRRPDAPAASPPPPAAESGSAGHRGSRARGASRSPAKKKSKSSGRRSKSPRTKRSRSPHYSTVKVKQEREDHPRRGREDRQHRELSEQEHRRARNSERDRHRGHARQRRSSDERPVSGQGRDRDSQILQAQEEERDFNNARRREHRQQNESAGAEAQEVIPRPAGNKNKEVPVKEKPSFELSGALLEDTNTFRGVVIKYSEPPEARIPKKRWRLYPFKNDEVLPVMYIHRQSAYLLGRHRRIADIPIDHPSCSKQHAVFQYRLVEYTRADGTVGRRVKPYIIDLGSGNGTFLNNKRIEPQRYYELKEKDVLKFGFSSREYVLLHESSDTSELDRKEDEDEEEEEEMVSDSS.

Residues 1-10 (MKAGKSERER) are compositionally biased toward basic and acidic residues. The tract at residues 1 to 212 (MKAGKSERER…GNKNKEVPVK (212 aa)) is disordered. Ser18 is subject to Phosphoserine. A Glycyl lysine isopeptide (Lys-Gly) (interchain with G-Cter in SUMO); alternate cross-link involves residue Lys28. A Glycyl lysine isopeptide (Lys-Gly) (interchain with G-Cter in SUMO1); alternate cross-link involves residue Lys28. Lys28 is covalently cross-linked (Glycyl lysine isopeptide (Lys-Gly) (interchain with G-Cter in SUMO2); alternate). The segment covering 28–43 (KQERLSPEPVAHRRPD) has biased composition (basic and acidic residues). A phosphoserine mark is found at Ser33 and Ser48. A compositionally biased stretch (low complexity) spans 54-72 (AESGSAGHRGSRARGASRS). The segment covering 73-95 (PAKKKSKSSGRRSKSPRTKRSRS) has biased composition (basic residues). Residue Ser95 is modified to Phosphoserine. Composition is skewed to basic and acidic residues over residues 103-138 (VKQE…ERDR) and 147-163 (RSSD…DRDS). Lys104 is covalently cross-linked (Glycyl lysine isopeptide (Lys-Gly) (interchain with G-Cter in SUMO2)). Ser149 is subject to Phosphoserine. Positions 166-197 (LQAQEEERDFNNARRREHRQQNESAGAEAQEV) form a coiled coil. Residue Lys214 forms a Glycyl lysine isopeptide (Lys-Gly) (interchain with G-Cter in SUMO2) linkage. An FHA domain is found at 272–335 (YLLGRHRRIA…NGTFLNNKRI (64 aa)). The segment covering 363–373 (ESSDTSELDRK) has biased composition (basic and acidic residues). The tract at residues 363–389 (ESSDTSELDRKEDEDEEEEEEMVSDSS) is disordered. Residues 374–389 (EDEDEEEEEEMVSDSS) are compositionally biased toward acidic residues. Residue Ser386 is modified to Phosphoserine.

In terms of assembly, component of activated spliceosome complexes. Component of the minor spliceosome, which splices U12-type introns. Binds SMAD4 and CREBBP/EP300. Binds the SMAD1/OAZ1/PSMB4 complex. Interacts with DROSHA and SMARCA4. Component of the SNARP complex which consists at least of SNIP1, SNW1, THRAP3, BCLAF1 and PNN. In terms of processing, degraded by the proteasome upon binding to the SMAD1/OAZ1/PSMB4 complex.

It is found in the nucleus. Required for pre-mRNA splicing as component of the spliceosome. As a component of the minor spliceosome, involved in the splicing of U12-type introns in pre-mRNAs. Down-regulates NF-kappa-B signaling by competing with RELA for CREBBP/EP300 binding. Involved in the microRNA (miRNA) biogenesis. May be involved in cyclin-D1/CCND1 mRNA stability through the SNARP complex which associates with both the 3'end of the CCND1 gene and its mRNA. The protein is Smad nuclear interacting protein 1 (Snip1) of Rattus norvegicus (Rat).